A 64-amino-acid polypeptide reads, in one-letter code: Small ribosomal subunit protein bS21 (64 aa).

Belongs to the bacterial ribosomal protein bS21 family.

The sequence is that of Small ribosomal subunit protein bS21 from Sulfurihydrogenibium sp. (strain YO3AOP1).